We begin with the raw amino-acid sequence, 338 residues long: (-)-alpha-amorphene synthase ((2E,6E)-farnesyl diphosphate cyclizing) (338 aa).

Mg(2+) contacts are provided by aspartate 105 and glutamate 109. The DDXXE motif motif lies at 105 to 109 (DDRAE). Arginine 196 contributes to the substrate binding site. Serine 246 serves as a coordination point for Mg(2+). Position 249 (lysine 249) interacts with substrate. Mg(2+) is bound at residue glutamate 250. A substrate-binding site is contributed by 327–328 (RY).

The protein belongs to the terpene synthase family. Mg(2+) serves as cofactor.

The enzyme catalyses (2E,6E)-farnesyl diphosphate = (-)-alpha-amorphene + diphosphate. The protein operates within secondary metabolite biosynthesis; terpenoid biosynthesis. In terms of biological role, catalyzes the conversion of (2E,6E)-farnesyl diphosphate (FPP) to yield the bicyclic sesquiterpene (1R,6S,7S)-(-)-alpha-amorphene via a probable 1,6-cyclization, which could involve the abstraction of the pyrophosphate from FPP to yield a (R)-bisabolyl cation. The only accepted substrate is (2E,6E)-farnesyl diphosphate (FPP). In Streptomyces viridochromogenes (strain DSM 40736 / JCM 4977 / BCRC 1201 / Tue 494), this protein is (-)-alpha-amorphene synthase ((2E,6E)-farnesyl diphosphate cyclizing).